The chain runs to 301 residues: NADH-cytochrome b5 reductase 2 (301 aa).

The helical transmembrane segment at 14–30 (FLVPFAGATALSIGLAL) threads the bilayer. Positions 51 to 155 (NEWVDLKLSK…KGPIVKWKWE (105 aa)) constitute an FAD-binding FR-type domain. Residue 158–193 (QFKSIALIGGGTGITPLYQLLHQITSNPKDNTKVNL) participates in FAD binding.

It belongs to the flavoprotein pyridine nucleotide cytochrome reductase family. FAD serves as cofactor.

The protein resides in the mitochondrion outer membrane. The enzyme catalyses 2 Fe(III)-[cytochrome b5] + NADH = 2 Fe(II)-[cytochrome b5] + NAD(+) + H(+). Functionally, may mediate the reduction of outer membrane cytochrome b5. In Candida albicans (strain SC5314 / ATCC MYA-2876) (Yeast), this protein is NADH-cytochrome b5 reductase 2 (MCR1).